A 795-amino-acid polypeptide reads, in one-letter code: Levansucrase (795 aa).

The first 36 residues, 1 to 36 (METKVRKKMYKKGKFWVVATITTAMLTGIGLSSVQA), serve as a signal peptide directing secretion. 2 stretches are compositionally biased toward polar residues: residues 42–66 (TQVSSELAERSQVQENTTASSSAAE) and 112–130 (QAATVTKTSASTPEVGQTN). Disordered regions lie at residues 42-83 (TQVS…NPAA) and 103-138 (ESKASKTKDQAATVTKTSASTPEVGQTNEKAKATKE). W245, D246, and S315 together coordinate sucrose. The active-site Nucleophile is D246. D394 contacts Ca(2+). The sucrose site is built by R399 and D400. Positions 425, 464, and 496 each coordinate Ca(2+). Position 497 (E497) interacts with sucrose. The active-site Proton donor/acceptor is E499. Sucrose is bound at residue R517. The chain crosses the membrane as a helical span at residues 774 to 794 (GNSFFAALLALFSAFCVSIGF).

Belongs to the glycosyl hydrolase 68 family.

It is found in the cell membrane. It localises to the cell surface. The enzyme catalyses [6)-beta-D-fructofuranosyl-(2-&gt;](n) alpha-D-glucopyranoside + sucrose = [6)-beta-D-fructofuranosyl-(2-&gt;](n+1) alpha-D-glucopyranoside + D-glucose. Its activity is regulated as follows. Ca(2+) may play an important structural role and promote stability of levansucrase. Its function is as follows. Catalyzes the synthesis of levan, a fructose polymer, by transferring the fructosyl moiety from sucrose to a growing acceptor molecule. Also displays sucrose hydrolase activity. The chain is Levansucrase from Streptococcus mutans serotype c (strain ATCC 700610 / UA159).